The sequence spans 207 residues: ATP synthase subunit b 2 (207 aa).

The chain crosses the membrane as a helical span at residues 53-72 (TYASQLLWLVITFGVFYLLM).

This sequence belongs to the ATPase B chain family. As to quaternary structure, F-type ATPases have 2 components, F(1) - the catalytic core - and F(0) - the membrane proton channel. F(1) has five subunits: alpha(3), beta(3), gamma(1), delta(1), epsilon(1). F(0) has three main subunits: a(1), b(2) and c(10-14). The alpha and beta chains form an alternating ring which encloses part of the gamma chain. F(1) is attached to F(0) by a central stalk formed by the gamma and epsilon chains, while a peripheral stalk is formed by the delta and b chains.

It is found in the cell inner membrane. F(1)F(0) ATP synthase produces ATP from ADP in the presence of a proton or sodium gradient. F-type ATPases consist of two structural domains, F(1) containing the extramembraneous catalytic core and F(0) containing the membrane proton channel, linked together by a central stalk and a peripheral stalk. During catalysis, ATP synthesis in the catalytic domain of F(1) is coupled via a rotary mechanism of the central stalk subunits to proton translocation. Functionally, component of the F(0) channel, it forms part of the peripheral stalk, linking F(1) to F(0). The b'-subunit is a diverged and duplicated form of b found in plants and photosynthetic bacteria. The polypeptide is ATP synthase subunit b 2 (atpF2) (Rhizobium etli (strain ATCC 51251 / DSM 11541 / JCM 21823 / NBRC 15573 / CFN 42)).